The following is a 339-amino-acid chain: DNA-directed RNA polymerase RPB7 homolog (339 aa).

This sequence belongs to the Asfivirus DNA-directed RNA polymerase RPB7 homolog family. In terms of assembly, part of the viral DNA-directed RNA polymerase that consists of 8 polII-like subunits (RPB1, RPB2, RPB3, RPB5, RPB6, RPB7, RPB9, RPB10), a capping enzyme and a termination factor.

It localises to the host cytoplasm. It is found in the virion. Functionally, component of the DNA-directed RNA polymerase (RNAP) that catalyzes the transcription in the cytoplasm of viral DNA into RNA using the four ribonucleoside triphosphates as substrates. The protein is DNA-directed RNA polymerase RPB7 homolog of Ornithodoros (relapsing fever ticks).